We begin with the raw amino-acid sequence, 169 residues long: Inorganic pyrophosphatase (169 aa).

Substrate contacts are provided by Lys-26, Arg-40, and Tyr-52. Mg(2+) contacts are provided by Asp-62, Asp-67, and Asp-99. Tyr-138 is a binding site for substrate.

It belongs to the PPase family. Homohexamer. Mg(2+) is required as a cofactor.

It is found in the cytoplasm. The catalysed reaction is diphosphate + H2O = 2 phosphate + H(+). Its function is as follows. Catalyzes the hydrolysis of inorganic pyrophosphate (PPi) forming two phosphate ions. This chain is Inorganic pyrophosphatase, found in Thermoplasma volcanium (strain ATCC 51530 / DSM 4299 / JCM 9571 / NBRC 15438 / GSS1).